The primary structure comprises 63 residues: Frenatin 1.1 (63 aa).

Residues 1–22 (MAFLKKSLFLVLFLGLVSLSIC) form the signal peptide. Positions 23 to 49 (EKEKKEQEDEDENEEEKESEEGSEEKR) are excised as a propeptide. The interval 25–63 (EKKEQEDEDENEEEKESEEGSEEKRGLLDTLGGILGLGR) is disordered. A compositionally biased stretch (acidic residues) spans 30–45 (EDEDENEEEKESEEGS). The residue at position 61 (Leu61) is a Leucine amide.

Expressed by the skin glands.

It is found in the secreted. Its function is as follows. Antimicrobial peptide with selective activity. Is only active against Micrococcus luteus (MIC=25 ug/ml) and not against Bacillus cereus, Escherichia coli, Leuconostoc mesenteroides, Micrococcus luteus, Pastewella haemolytica, Staphylococcus aureus, Streptococcus faecalis and Streptococcus uberis. The protein is Frenatin 1.1 of Nyctimystes infrafrenatus (White-lipped tree frog).